A 63-amino-acid chain; its full sequence is Glutamine synthetase translation inhibitor (63 aa).

In terms of biological role, inhibits the synthesis of glutamine synthetase II. The protein is Glutamine synthetase translation inhibitor (gstI) of Rhizobium leguminosarum.